The primary structure comprises 210 residues: Quaternary-amine-specific corrinoid protein (210 aa).

The 90-residue stretch at Met-1 to Ala-90 folds into the B12-binding N-terminal domain. The B12-binding domain occupies Ala-90–Gly-210. Residue His-103 coordinates methylcob(III)alamin.

It belongs to the methylamine corrinoid protein family. As to quaternary structure, the proline betaine:THF methyl transfer system is composed of two methyltransferases, MtpB and MtqA, and the corrinoid protein MtqC. The L-carnitine:THF methyl transfer system is composed of two methyltransferases, MtcB and MtqA, and the corrinoid protein MtqC.

Functionally, involved in the degradation of the quaternary amines L-proline betaine and L-carnitine. Component of a corrinoid-dependent methyltransferase system that transfers a methyl group from L-proline betaine or L-carnitine to tetrahydrofolate (THF), forming methyl-THF, a key intermediate in the Wood-Ljungdahl acetogenesis pathway. Acts as a methyl group carrier between MtpB or MtcB, and MtqA. A methyl group from L-proline betaine or L-carnitine is first transferred to the corrinoid prosthetic group of MtqC by MtpB or MtcB, respectively, and then transferred from MtqC to THF by MtqA. This is Quaternary-amine-specific corrinoid protein from Eubacterium limosum.